Reading from the N-terminus, the 500-residue chain is Probable cytosol aminopeptidase (500 aa).

Positions 265 and 270 each coordinate Mn(2+). Lys277 is an active-site residue. 3 residues coordinate Mn(2+): Asp288, Asp347, and Glu349. Arg351 is a catalytic residue.

The protein belongs to the peptidase M17 family. Mn(2+) serves as cofactor.

The protein localises to the cytoplasm. The catalysed reaction is Release of an N-terminal amino acid, Xaa-|-Yaa-, in which Xaa is preferably Leu, but may be other amino acids including Pro although not Arg or Lys, and Yaa may be Pro. Amino acid amides and methyl esters are also readily hydrolyzed, but rates on arylamides are exceedingly low.. The enzyme catalyses Release of an N-terminal amino acid, preferentially leucine, but not glutamic or aspartic acids.. In terms of biological role, presumably involved in the processing and regular turnover of intracellular proteins. Catalyzes the removal of unsubstituted N-terminal amino acids from various peptides. This Rickettsia peacockii (strain Rustic) protein is Probable cytosol aminopeptidase.